The sequence spans 157 residues: MTAIRLYVDADACPVKDEIYRVAERHGVSVSVVAGGYIRVPDHPLIERIAAGPGMDAADDWIAERAGKTDIVITADIPLASRCVKAGASVIAPNGKPFTEQSIGMTLAVRNLMTDLRASGEMTGGPRSFQPRDRSAFLSALDQAIRRIRRACAARQG.

The protein belongs to the UPF0178 family.

The protein is UPF0178 protein Nwi_2152 of Nitrobacter winogradskyi (strain ATCC 25391 / DSM 10237 / CIP 104748 / NCIMB 11846 / Nb-255).